The following is a 136-amino-acid chain: Cytochrome b5 (136 aa).

Residues 5-81 form the Cytochrome b5 heme-binding domain; that stretch reads TKVFTLAEVS…LDEYYVGDID (77 aa). Heme-binding residues include His40 and His64. Residues 107-127 traverse the membrane as a helical segment; it reads FVVKLLQFLVPLIILGVAFGI.

The protein belongs to the cytochrome b5 family. Is highly expressed in developing seeds, moderately expressed in flowers, and is expressed at low levels in the leaf.

Its subcellular location is the endoplasmic reticulum membrane. It is found in the microsome membrane. Its function is as follows. Cytochrome b5 is a membrane bound hemoprotein which function as an electron carrier for several membrane bound oxygenases. May play a key role in the modification by desaturation of fatty acids in the endoplasmic reticulum, which in the developing seed is utilized for membrane synthesis and in the developmentally regulated production of large amounts of storage lipids. Is involved in the reduction of cytochrome P-450 and may therefore be involved in flavonoid biosynthesis in the petals. The sequence is that of Cytochrome b5 from Nicotiana tabacum (Common tobacco).